The sequence spans 300 residues: MNNSHHRLIKSVSYLSVTTALIILIIKLYAWVVTSSQSILASLIDSMLDITSSFINLVALRFALQPPDHYHRFGHEKMQDLTIFSQSIFFFASAFFVGFASVKSLFIKTKPENISDGTIIMYLCMFLTIILVLYQTYVIKKTGSEIVKADKLHYFTDLLTNVIVIISINLSDYFWFVDPLFGVVISLYIFHSSYSLFKKAFKNLVDHELPEQDRQKIISIVNNHSGVKGMHEMKTRYAAQKAFIQCHLEMDGNISLYSAHKISDEIAFEILQKFPEAEIIIHQDPFGIEEHVNYREYIVR.

5 helical membrane-spanning segments follow: residues 14–34 (YLSV…WVVT), 39–59 (ILAS…NLVA), 87–107 (SIFF…SLFI), 119–139 (IIMY…TYVI), and 170–190 (LSDY…LYIF).

This sequence belongs to the cation diffusion facilitator (CDF) transporter (TC 2.A.4) family.

Its subcellular location is the cell membrane. The chain is Protein p34 (p34) from Rickettsia prowazekii (strain Madrid E).